A 330-amino-acid polypeptide reads, in one-letter code: MAELLLVETPIPQQKHYESKPFPAVISPPSASIPIPALSLPLFTQTIKTQKHYLDSLLHESGAVLFRGFPVNSADDFNDVVEAFGFDELPYVGGAAPRTSVVGRVFTANESPPDQKIPFHHEMAQVREFPSKLFFYCEIEPKCGGETPIVLSHVVYERMKDKHPEFVQRLEEHGLLYVRVLGEDDDPSSPIGRGWKSTFLTHDKNLAEQRAVDLGMKLEWTEDGGAKTVMGPIPAIKYDESRNRKVWFNSMVAAYTGWEDKRNDPRKAVTFGDGKPLPADIVHDCLRILEEECVAVPWQRGDVLLIDNWAVLHSRRPFDPPRRVLASLCK.

At Ala-2 the chain carries N-acetylalanine. His-120, Glu-122, and His-313 together coordinate Fe cation.

The cofactor is Fe cation.

The protein is Clavaminate synthase-like protein At3g21360 of Arabidopsis thaliana (Mouse-ear cress).